Here is a 105-residue protein sequence, read N- to C-terminus: Thioredoxin (105 aa).

In terms of domain architecture, Thioredoxin spans 2-105 (VKQIESKYAF…KLEATINELI (104 aa)). Position 3 is an N6-acetyllysine (lysine 3). Lysine 8 is subject to N6-succinyllysine. Catalysis depends on nucleophile residues cysteine 32 and cysteine 35. An intrachain disulfide couples cysteine 32 to cysteine 35. An N6-acetyllysine modification is found at lysine 39. Residues cysteine 62 and cysteine 69 each carry the S-nitrosocysteine modification. At cysteine 73 the chain carries S-nitrosocysteine; alternate. Position 94 is an N6-acetyllysine; alternate (lysine 94). Lysine 94 is subject to N6-succinyllysine; alternate.

This sequence belongs to the thioredoxin family. Homodimer; disulfide-linked. Interacts with TXNIP through the redox-active site. Interacts with MAP3K5 and CASP3. Interacts with APEX1; the interaction stimulates the FOS/JUN AP-1 DNA-binding activity in a redox-dependent manner. In terms of processing, in the fully reduced protein, both Cys-69 and Cys-73 are nitrosylated in response to nitric oxide (NO). When two disulfide bonds are present in the protein, only Cys-73 is nitrosylated. Cys-73 can serve as donor for nitrosylation of target proteins.

It localises to the nucleus. It is found in the cytoplasm. Its subcellular location is the secreted. In terms of biological role, participates in various redox reactions through the reversible oxidation of its active center dithiol to a disulfide and catalyzes dithiol-disulfide exchange reactions. Plays a role in the reversible S-nitrosylation of cysteine residues in target proteins, and thereby contributes to the response to intracellular nitric oxide. Nitrosylates the active site Cys of CASP3 in response to nitric oxide (NO), and thereby inhibits caspase-3 activity. Induces the FOS/JUN AP-1 DNA binding activity in ionizing radiation (IR) cells through its oxidation/reduction status and stimulates AP-1 transcriptional activity. This Ovis aries (Sheep) protein is Thioredoxin (TXN).